Reading from the N-terminus, the 91-residue chain is ATP synthase subunit c (91 aa).

2 consecutive transmembrane segments (helical) span residues 4 to 24 (FTMC…GTGI) and 53 to 73 (IGLA…LIIL).

Belongs to the ATPase C chain family. As to quaternary structure, F-type ATPases have 2 components, F(1) - the catalytic core - and F(0) - the membrane proton channel. F(1) has five subunits: alpha(3), beta(3), gamma(1), delta(1), epsilon(1). F(0) has three main subunits: a(1), b(2) and c(10-14). The alpha and beta chains form an alternating ring which encloses part of the gamma chain. F(1) is attached to F(0) by a central stalk formed by the gamma and epsilon chains, while a peripheral stalk is formed by the delta and b chains.

The protein resides in the cell inner membrane. Functionally, f(1)F(0) ATP synthase produces ATP from ADP in the presence of a proton or sodium gradient. F-type ATPases consist of two structural domains, F(1) containing the extramembraneous catalytic core and F(0) containing the membrane proton channel, linked together by a central stalk and a peripheral stalk. During catalysis, ATP synthesis in the catalytic domain of F(1) is coupled via a rotary mechanism of the central stalk subunits to proton translocation. Key component of the F(0) channel; it plays a direct role in translocation across the membrane. A homomeric c-ring of between 10-14 subunits forms the central stalk rotor element with the F(1) delta and epsilon subunits. This is ATP synthase subunit c from Geobacter sulfurreducens (strain ATCC 51573 / DSM 12127 / PCA).